The chain runs to 287 residues: ATP synthase gamma chain (287 aa).

The protein belongs to the ATPase gamma chain family. In terms of assembly, F-type ATPases have 2 components, CF(1) - the catalytic core - and CF(0) - the membrane proton channel. CF(1) has five subunits: alpha(3), beta(3), gamma(1), delta(1), epsilon(1). CF(0) has three main subunits: a, b and c.

It is found in the cell inner membrane. Its function is as follows. Produces ATP from ADP in the presence of a proton gradient across the membrane. The gamma chain is believed to be important in regulating ATPase activity and the flow of protons through the CF(0) complex. The polypeptide is ATP synthase gamma chain (Yersinia enterocolitica serotype O:8 / biotype 1B (strain NCTC 13174 / 8081)).